A 323-amino-acid polypeptide reads, in one-letter code: ADP-ribose glycohydrolase MACROD1 (323 aa).

N6-succinyllysine is present on residues lysine 94, lysine 101, and lysine 127. Residue lysine 136 forms a Glycyl lysine isopeptide (Lys-Gly) (interchain with G-Cter in SUMO2) linkage. The region spanning 139–320 (DPKYKKDKQL…IYRERLPHYF (182 aa)) is the Macro domain. Residue 157 to 159 (GDI) coordinates substrate. Residue lysine 161 is modified to N6-acetyllysine. Residues 170–172 (AAN), 177–182 (GGGGVD), 265–271 (ISTGVFG), and phenylalanine 304 each bind substrate.

This sequence belongs to the MacroD-type family. MacroD1/2-like subfamily. In terms of assembly, interacts with ESR1; Interacts in a manner that is estrogen independent but is enhanced by estrogen. Interacts (via macro domain) with AR.

The protein localises to the nucleus. The enzyme catalyses 3''-O-acetyl-ADP-D-ribose + H2O = ADP-D-ribose + acetate + H(+). The catalysed reaction is 2''-O-acetyl-ADP-D-ribose + H2O = ADP-D-ribose + acetate + H(+). It catalyses the reaction 4-O-(ADP-D-ribosyl)-L-aspartyl-[protein] + H2O = L-aspartyl-[protein] + ADP-D-ribose + H(+). It carries out the reaction 5-O-(ADP-D-ribosyl)-L-glutamyl-[protein] + H2O = L-glutamyl-[protein] + ADP-D-ribose + H(+). The enzyme catalyses alpha-NAD(+) + H2O = ADP-D-ribose + nicotinamide + H(+). With respect to regulation, subject to competitive inhibition by the product ADP-ribose. In terms of biological role, removes ADP-ribose from aspartate and glutamate residues in proteins bearing a single ADP-ribose moiety. Inactive towards proteins bearing poly-ADP-ribose. Deacetylates O-acetyl-ADP ribose, a signaling molecule generated by the deacetylation of acetylated lysine residues in histones and other proteins. Plays a role in estrogen signaling. Binds to androgen receptor (AR) and amplifies the transactivation function of AR in response to androgen. May play an important role in carcinogenesis and/or progression of hormone-dependent cancers by feed-forward mechanism that activates ESR1 transactivation. Could be an ESR1 coactivator, providing a positive feedback regulatory loop for ESR1 signal transduction. Could be involved in invasive growth by down-regulating CDH1 in endometrial cancer cells. Enhances ESR1-mediated transcription activity. The sequence is that of ADP-ribose glycohydrolase MACROD1 from Mus musculus (Mouse).